A 104-amino-acid chain; its full sequence is UPF0212 protein PH1312 (104 aa).

Belongs to the UPF0212 family.

This chain is UPF0212 protein PH1312, found in Pyrococcus horikoshii (strain ATCC 700860 / DSM 12428 / JCM 9974 / NBRC 100139 / OT-3).